The primary structure comprises 231 residues: Red fluorescent protein eqFP611 (231 aa).

Positions 63–65 form a cross-link, 2-iminomethyl-5-imidazolinone (Met-Gly); that stretch reads MYG. Tyr64 carries the (E)-2,3-didehydrotyrosine modification.

This sequence belongs to the GFP family. In terms of assembly, monomer. Contains a chromophore consisting of modified amino acid residues. The chromophore is formed by autocatalytic backbone condensation between Xaa-N and Gly-(N+2), oxidation of Tyr-(N+1) to didehydrotyrosine, and formation of a double bond to the alpha-amino nitrogen of residue Xaa-N. Maturation of the chromophore requires nothing other than molecular oxygen.

Its function is as follows. Pigment protein. The chain is Red fluorescent protein eqFP611 from Entacmaea quadricolor (Bubble-tip anemone).